Consider the following 434-residue polypeptide: MFS-type transporter AFUA_1G00970 (434 aa).

The next 12 membrane-spanning stretches (helical) occupy residues 21-41 (VIGG…FGVF), 60-80 (WIGS…GVLV), 87-107 (VLLI…SLCS), 112-132 (IFLA…WPPF), 145-165 (LALG…SIMI), 182-202 (VLGF…TEPP), 240-260 (VFIS…NPFF), 278-298 (YMIS…GIVA), 301-321 (VGHY…SFCW), 327-347 (LTGL…ILSL), 364-384 (AIGF…PIGG), and 393-413 (LSLS…MGYA). The segment at 201-225 (PPKQSQPQPRPALEATVEGGSASPT) is disordered.

Belongs to the major facilitator superfamily. Monocarboxylate porter (TC 2.A.1.13) family.

Its subcellular location is the cell membrane. MFS-type transporter; part of the gene cluster that mediates the biosynthesis of fumigermin that inhibits germination of spores of the inducing S.rapamycinicus, and thus helps the fungus to defend resources in the shared habitat against a bacterial competitor. May be involved in the secretion of fumigermin. This Aspergillus fumigatus (strain ATCC MYA-4609 / CBS 101355 / FGSC A1100 / Af293) (Neosartorya fumigata) protein is MFS-type transporter AFUA_1G00970.